Consider the following 392-residue polypeptide: GTPase Obg (392 aa).

The 159-residue stretch at 1 to 159 folds into the Obg domain; sequence MKFVDEATIL…RDLQLELMLL (159 aa). The segment at 127–148 is disordered; sequence NTRFKSSVNRTPRQKTMGTPGD. Residues 129–143 show a composition bias toward polar residues; that stretch reads RFKSSVNRTPRQKTM. The region spanning 160–333 is the OBG-type G domain; the sequence is ADVGMLGMPN…LCWDVMTFII (174 aa). Residues 166-173, 191-195, 213-216, 283-286, and 314-316 contribute to the GTP site; these read GMPNAGKS, FTTLV, DIPG, NKID, and SAA. Mg(2+) contacts are provided by Ser-173 and Thr-193. The segment covering 362-386 has biased composition (acidic residues); the sequence is EEAEAEAEDDEDWDDDWDEDDEEGV. Positions 362–392 are disordered; that stretch reads EEAEAEAEDDEDWDDDWDEDDEEGVEFIYKR.

It belongs to the TRAFAC class OBG-HflX-like GTPase superfamily. OBG GTPase family. Monomer. Mg(2+) serves as cofactor.

It localises to the cytoplasm. In terms of biological role, an essential GTPase which binds GTP, GDP and possibly (p)ppGpp with moderate affinity, with high nucleotide exchange rates and a fairly low GTP hydrolysis rate. Plays a role in control of the cell cycle, stress response, ribosome biogenesis and in those bacteria that undergo differentiation, in morphogenesis control. The sequence is that of GTPase Obg from Klebsiella pneumoniae subsp. pneumoniae (strain ATCC 700721 / MGH 78578).